The sequence spans 111 residues: BET1-like protein (111 aa).

At 1-86 (MADWARAQSP…MARSGQDNRK (86 aa)) the chain is on the cytoplasmic side. Phosphoserine is present on residues S9 and S37. One can recognise a t-SNARE coiled-coil homology domain in the interval 15–77 (EILDRENKRM…TGSVKRFSTM (63 aa)). Residues 87-107 (LLCGMAVGLIVAFFILSYFLS) form a helical; Anchor for type IV membrane protein membrane-spanning segment. Over 108–111 (RART) the chain is Lumenal.

In terms of assembly, component of a SNARE complex consisting of STX5, YKT6, GOSR1 and BET1L. Interacts with STX5.

The protein localises to the golgi apparatus membrane. It is found in the golgi apparatus. Its subcellular location is the trans-Golgi network membrane. In terms of biological role, vesicle SNARE required for targeting and fusion of retrograde transport vesicles with the Golgi complex. Required for the integrity of the Golgi complex. The polypeptide is BET1-like protein (Homo sapiens (Human)).